The following is a 304-amino-acid chain: Carnitine monooxygenase reductase subunit (304 aa).

The FAD-binding FR-type domain occupies 1-93 (MEQLTPLIKR…SEPKNLFPLA (93 aa)). The 2Fe-2S ferredoxin-type domain maps to 219 to 304 (FTVVLAKSNQ…AKGKKLVLDL (86 aa)). [2Fe-2S] cluster contacts are provided by Cys253, Cys258, Cys261, and Cys291.

This sequence belongs to the PDR/VanB family. CntB subfamily. As to quaternary structure, composed of an oxygenase subunit and a reductase subunit. Requires FMN as cofactor. The cofactor is [2Fe-2S] cluster.

The catalysed reaction is (R)-carnitine + NADH + O2 + H(+) = (3R)-3-hydroxy-4-oxobutanoate + trimethylamine + NAD(+) + H2O. The enzyme catalyses (R)-carnitine + NADPH + O2 + H(+) = (3R)-3-hydroxy-4-oxobutanoate + trimethylamine + NADP(+) + H2O. Its pathway is amine and polyamine metabolism; carnitine metabolism. Inhibited by EDTA. Functionally, converts carnitine to trimethylamine and malic semialdehyde. Acts on both enantiomers. The chain is Carnitine monooxygenase reductase subunit from Acinetobacter pittii (strain PHEA-2).